The following is a 443-amino-acid chain: Protoheme IX farnesyltransferase, mitochondrial (443 aa).

The next 7 helical transmembrane spans lie at 174-194 (AAGFALAPGPFDWPCFLLTSV), 235-255 (LAVSFATCCAVPGVAILTLGV), 257-277 (PLTGALGLFNIFLYTCCYTPL), 280-300 (ISIANTWVGAVVGAIPPVMGW), 309-329 (AGAFLLGGILYSWQFPHFNAL), 364-384 (LLVLSAAAPVLDITTWTFPIM), and 411-431 (LFFCSLWHLPLLLLLMLTCKR).

Belongs to the UbiA prenyltransferase family.

It localises to the mitochondrion membrane. The enzyme catalyses heme b + (2E,6E)-farnesyl diphosphate + H2O = Fe(II)-heme o + diphosphate. Functionally, converts protoheme IX and farnesyl diphosphate to heme O. The sequence is that of Protoheme IX farnesyltransferase, mitochondrial (COX10) from Pongo abelii (Sumatran orangutan).